The chain runs to 37 residues: Large ribosomal subunit protein bL36A (37 aa).

It belongs to the bacterial ribosomal protein bL36 family.

This chain is Large ribosomal subunit protein bL36A, found in Actinobacillus pleuropneumoniae serotype 5b (strain L20).